Consider the following 472-residue polypeptide: Phosphoenolpyruvate carboxylase (472 aa).

This sequence belongs to the PEPCase type 2 family. Homotetramer. It depends on Mg(2+) as a cofactor.

It carries out the reaction oxaloacetate + phosphate = phosphoenolpyruvate + hydrogencarbonate. Catalyzes the irreversible beta-carboxylation of phosphoenolpyruvate (PEP) to form oxaloacetate (OAA), a four-carbon dicarboxylic acid source for the tricarboxylic acid cycle. This is Phosphoenolpyruvate carboxylase from Pyrococcus furiosus (strain ATCC 43587 / DSM 3638 / JCM 8422 / Vc1).